Consider the following 183-residue polypeptide: Capsid protein (183 aa).

The segment at Asn136–Cys183 is disordered. A compositionally biased stretch (basic residues) spans Val149 to Ser176. 3 positions are modified to phosphoserine; by host: Ser155, Ser162, and Ser170. The 1; half-length repeat unit spans residues Ser155 to Pro161. Residues Ser155–Gln177 form a 3 X 8 AA repeats of S-P-R-R-R-[PR]-S-Q region. Residues Arg158–Arg175 carry the Bipartite nuclear localization signal motif. A run of 2 repeats spans residues Ser162–Gln169 and Ser170–Gln177. Positions Gln177–Cys183 are RNA binding.

The protein belongs to the orthohepadnavirus core antigen family. Homodimerizes, then multimerizes. Interacts with cytosol exposed regions of viral L glycoprotein present in the reticulum-to-Golgi compartment. Interacts with human FLNB. Phosphorylated form interacts with host importin alpha; this interaction depends on the exposure of the NLS, which itself depends upon genome maturation and/or phosphorylation of the capsid protein. Interacts with host NUP153. In terms of processing, phosphorylated by host SRPK1, SRPK2, and maybe protein kinase C or GAPDH. Phosphorylation is critical for pregenomic RNA packaging. Protein kinase C phosphorylation is stimulated by HBx protein and may play a role in transport of the viral genome to the nucleus at the late step during the viral replication cycle.

The protein localises to the virion. Its subcellular location is the host cytoplasm. In terms of biological role, self assembles to form an icosahedral capsid. Most capsids appear to be large particles with an icosahedral symmetry of T=4 and consist of 240 copies of capsid protein, though a fraction forms smaller T=3 particles consisting of 180 capsid proteins. Entering capsids are transported along microtubules to the nucleus. Phosphorylation of the capsid is thought to induce exposure of nuclear localization signal in the C-terminal portion of the capsid protein that allows binding to the nuclear pore complex via the importin (karyopherin-) alpha and beta. Capsids are imported in intact form through the nuclear pore into the nuclear basket, where it probably binds NUP153. Only capsids that contain the mature viral genome can release the viral DNA and capsid protein into the nucleoplasm. Immature capsids get stuck in the basket. Capsids encapsulate the pre-genomic RNA and the P protein. Pre-genomic RNA is reverse-transcribed into DNA while the capsid is still in the cytoplasm. The capsid can then either be directed to the nucleus, providing more genomes for transcription, or bud through the endoplasmic reticulum to provide new virions. The polypeptide is Capsid protein (Homo sapiens (Human)).